Here is an 84-residue protein sequence, read N- to C-terminus: Acyl carrier protein homolog (84 aa).

The Carrier domain maps to 4-79 (RDILLKIKEI…ELIAEVKHLI (76 aa)). At Ser39 the chain carries O-(pantetheine 4'-phosphoryl)serine.

Post-translationally, 4'-phosphopantetheine is transferred from CoA to a specific serine of the apo-ACP-like protein.

It functions in the pathway lipid metabolism; fatty acid biosynthesis. In terms of biological role, carrier of the growing fatty acid chain in fatty acid biosynthesis. In Mycoplasma pneumoniae (strain ATCC 29342 / M129 / Subtype 1) (Mycoplasmoides pneumoniae), this protein is Acyl carrier protein homolog.